A 521-amino-acid polypeptide reads, in one-letter code: Cytochrome P450 1A1 (521 aa).

Phe-229 lines the substrate pocket. Cys-463 contacts heme.

The protein belongs to the cytochrome P450 family. Heme is required as a cofactor.

It is found in the endoplasmic reticulum membrane. Its subcellular location is the microsome membrane. The catalysed reaction is an organic molecule + reduced [NADPH--hemoprotein reductase] + O2 = an alcohol + oxidized [NADPH--hemoprotein reductase] + H2O + H(+). Its function is as follows. Cytochromes P450 are a group of heme-thiolate monooxygenases. They oxidize a variety of structurally unrelated compounds, including steroids, fatty acids, and xenobiotics. The chain is Cytochrome P450 1A1 (cyp1a1) from Chaetodon capistratus (Four-eye butterflyfish).